The primary structure comprises 243 residues: Type III pantothenate kinase (243 aa).

7–14 (DLGNSRFK) contributes to the ATP binding site. Residues Tyr-91 and 98 to 101 (GVDR) contribute to the substrate site. Asp-100 (proton acceptor) is an active-site residue. ATP is bound at residue Thr-122. Thr-172 is a binding site for substrate.

It belongs to the type III pantothenate kinase family. Homodimer. Requires NH4(+) as cofactor. K(+) is required as a cofactor.

The protein resides in the cytoplasm. The catalysed reaction is (R)-pantothenate + ATP = (R)-4'-phosphopantothenate + ADP + H(+). It functions in the pathway cofactor biosynthesis; coenzyme A biosynthesis; CoA from (R)-pantothenate: step 1/5. In terms of biological role, catalyzes the phosphorylation of pantothenate (Pan), the first step in CoA biosynthesis. This Stenotrophomonas maltophilia (strain K279a) protein is Type III pantothenate kinase.